We begin with the raw amino-acid sequence, 1368 residues long: DNA-directed RNA polymerase subunit beta (1368 aa).

The protein belongs to the RNA polymerase beta chain family. The RNAP catalytic core consists of 2 alpha, 1 beta, 1 beta' and 1 omega subunit. When a sigma factor is associated with the core the holoenzyme is formed, which can initiate transcription.

It catalyses the reaction RNA(n) + a ribonucleoside 5'-triphosphate = RNA(n+1) + diphosphate. Its function is as follows. DNA-dependent RNA polymerase catalyzes the transcription of DNA into RNA using the four ribonucleoside triphosphates as substrates. This chain is DNA-directed RNA polymerase subunit beta, found in Burkholderia mallei (strain SAVP1).